Reading from the N-terminus, the 300-residue chain is Bifunctional protein FolD (300 aa).

NADP(+) contacts are provided by residues 169 to 171 and isoleucine 235; that span reads GHS.

Belongs to the tetrahydrofolate dehydrogenase/cyclohydrolase family. As to quaternary structure, homodimer.

The enzyme catalyses (6R)-5,10-methylene-5,6,7,8-tetrahydrofolate + NADP(+) = (6R)-5,10-methenyltetrahydrofolate + NADPH. The catalysed reaction is (6R)-5,10-methenyltetrahydrofolate + H2O = (6R)-10-formyltetrahydrofolate + H(+). It functions in the pathway one-carbon metabolism; tetrahydrofolate interconversion. Functionally, catalyzes the oxidation of 5,10-methylenetetrahydrofolate to 5,10-methenyltetrahydrofolate and then the hydrolysis of 5,10-methenyltetrahydrofolate to 10-formyltetrahydrofolate. The polypeptide is Bifunctional protein FolD (Rhodobacter capsulatus (strain ATCC BAA-309 / NBRC 16581 / SB1003)).